Here is a 108-residue protein sequence, read N- to C-terminus: UPF0060 membrane protein YE2027 (108 aa).

The next 4 helical transmembrane spans lie at 6–26, 29–49, 59–79, and 85–105; these read LLFFVTALAEIIGCFLPYLWL, GASMWLLLPAAASLALFVWLL, VYAAYGGVYVATALIWLRVVD, and LFDWVGAAVALVGMLIIVAGW.

It belongs to the UPF0060 family.

It localises to the cell inner membrane. The sequence is that of UPF0060 membrane protein YE2027 from Yersinia enterocolitica serotype O:8 / biotype 1B (strain NCTC 13174 / 8081).